Reading from the N-terminus, the 164-residue chain is Ferredoxin-type protein NapF (164 aa).

4Fe-4S ferredoxin-type domains follow at residues 28-57, 58-89, and 132-161; these read GDES…RGAG, GYPS…PRHT, and YQPQ…AEYL. Positions 37, 40, 43, 47, 69, 72, 75, 79, 141, 144, 147, and 151 each coordinate [4Fe-4S] cluster.

Belongs to the NapF family. As to quaternary structure, interacts with the cytoplasmic NapA precursor. [4Fe-4S] cluster is required as a cofactor.

Its subcellular location is the cytoplasm. Functionally, could be involved in the maturation of NapA, the catalytic subunit of the periplasmic nitrate reductase, before its export into the periplasm. The protein is Ferredoxin-type protein NapF of Escherichia coli O157:H7.